A 99-amino-acid polypeptide reads, in one-letter code: UPF0213 protein RBAM_000440 (99 aa).

The GIY-YIG domain maps to 4–79 (NSHFFYVLLC…KQLTRKKKEQ (76 aa)).

It belongs to the UPF0213 family.

This chain is UPF0213 protein RBAM_000440, found in Bacillus velezensis (strain DSM 23117 / BGSC 10A6 / LMG 26770 / FZB42) (Bacillus amyloliquefaciens subsp. plantarum).